The chain runs to 126 residues: Holo-[acyl-carrier-protein] synthase (126 aa).

Asp8 and Glu59 together coordinate Mg(2+).

Belongs to the P-Pant transferase superfamily. AcpS family. Mg(2+) is required as a cofactor.

Its subcellular location is the cytoplasm. The enzyme catalyses apo-[ACP] + CoA = holo-[ACP] + adenosine 3',5'-bisphosphate + H(+). Transfers the 4'-phosphopantetheine moiety from coenzyme A to a Ser of acyl-carrier-protein. The polypeptide is Holo-[acyl-carrier-protein] synthase (Rickettsia akari (strain Hartford)).